The primary structure comprises 154 residues: Decarboxylase claH (154 aa).

This sequence belongs to the tpcK family.

The catalysed reaction is atrochrysone carboxylate + H(+) = atrochrysone + CO2. It participates in pigment biosynthesis. Decarboxylase involved in the biosynthesis of the bianthraquinone cladofulvin, a conidial pigment not required for virulence but that plays a role in fitness and resistance to environmental stresses including UV light and low-temperature stress. The pathway begins with the synthesis of atrochrysone thioester by the polyketide synthase (PKS) claG. The atrochrysone carboxyl ACP thioesterase claF then breaks the thioester bond and releases the atrochrysone carboxylic acid from claG. This compound is decarboxylated by claH to yield emodin, which is further converted to chrysophanol hydroquinone by the reductase claC and the dehydratase claB. The cytochrome monooxygenase P450 claM then catalyzes the dimerization of nataloe-emodin to cladofulvin. The polypeptide is Decarboxylase claH (Passalora fulva (Tomato leaf mold)).